The primary structure comprises 178 residues: MSAKSSNLVSVGRITAVYGIKGWVKVHSYTEPQDNLFEYHPWWVKTRHGVKQVEIDEARPHGDAYVAHIKGVDDRDLAMAYTAADIAVERDLLPELEDGEYYWNQLEGLSVFTVFGGEQRLGVVTKLLETGANDVLVVQGDAQSIDQRERLIPYVPGQFVLSVDLDSKRILVDWDPEF.

One can recognise a PRC barrel domain in the interval 98–178; sequence DGEYYWNQLE…RILVDWDPEF (81 aa).

This sequence belongs to the RimM family. In terms of assembly, binds ribosomal protein uS19.

The protein resides in the cytoplasm. In terms of biological role, an accessory protein needed during the final step in the assembly of 30S ribosomal subunit, possibly for assembly of the head region. Essential for efficient processing of 16S rRNA. May be needed both before and after RbfA during the maturation of 16S rRNA. It has affinity for free ribosomal 30S subunits but not for 70S ribosomes. This chain is Ribosome maturation factor RimM, found in Cellvibrio japonicus (strain Ueda107) (Pseudomonas fluorescens subsp. cellulosa).